A 346-amino-acid polypeptide reads, in one-letter code: D-alanine--D-alanine ligase (346 aa).

The 194-residue stretch at 133–326 (KFLAQKAGVK…LANSLPKERE (194 aa)) folds into the ATP-grasp domain. Residue 159–209 (YPIILKPARLGSSIGVSVVHDDSELAYAKDVAFEFDKDVLVEPFIKGVKEY) coordinates ATP. The Mg(2+) site is built by D282, E294, and N296.

The protein belongs to the D-alanine--D-alanine ligase family. Mg(2+) is required as a cofactor. It depends on Mn(2+) as a cofactor.

The protein localises to the cytoplasm. The catalysed reaction is 2 D-alanine + ATP = D-alanyl-D-alanine + ADP + phosphate + H(+). It participates in cell wall biogenesis; peptidoglycan biosynthesis. In terms of biological role, cell wall formation. The chain is D-alanine--D-alanine ligase from Campylobacter concisus (strain 13826).